We begin with the raw amino-acid sequence, 206 residues long: Undecaprenyl-diphosphatase (206 aa).

A run of 5 helical transmembrane segments spans residues 5–25, 53–73, 79–99, 138–158, and 164–184; these read YYWILLLLFLILSIYIKLIGG, FLSKYGREYVWIPVTALLLIF, IGITLVISFVIAIVLGEVSKY, VTLLLTSPKWMWILGIIEAVL, and VYVGVHWPLDVIAGWLLGSWI.

Its subcellular location is the cell membrane. The catalysed reaction is di-trans,octa-cis-undecaprenyl diphosphate + H2O = di-trans,octa-cis-undecaprenyl phosphate + phosphate + H(+). This chain is Undecaprenyl-diphosphatase (sepP), found in Sulfolobus acidocaldarius (strain ATCC 33909 / DSM 639 / JCM 8929 / NBRC 15157 / NCIMB 11770).